Reading from the N-terminus, the 75-residue chain is ATP synthase subunit 9, mitochondrial (75 aa).

2 consecutive transmembrane segments (helical) span residues 10–30 (LVLGLCMLPISAAALGVGILF) and 55–75 (FALVETFVFMSFFFGVIVYFI).

It belongs to the ATPase C chain family. As to quaternary structure, F-type ATPases have 2 components, CF(1) - the catalytic core - and CF(0) - the membrane proton channel. CF(1) has five subunits: alpha(3), beta(3), gamma(1), delta(1), epsilon(1). CF(0) has three main subunits: a, b and c.

It localises to the mitochondrion membrane. Its function is as follows. Mitochondrial membrane ATP synthase (F(1)F(0) ATP synthase or Complex V) produces ATP from ADP in the presence of a proton gradient across the membrane which is generated by electron transport complexes of the respiratory chain. F-type ATPases consist of two structural domains, F(1) - containing the extramembraneous catalytic core and F(0) - containing the membrane proton channel, linked together by a central stalk and a peripheral stalk. During catalysis, ATP synthesis in the catalytic domain of F(1) is coupled via a rotary mechanism of the central stalk subunits to proton translocation. Part of the complex F(0) domain. A homomeric c-ring of probably 10 subunits is part of the complex rotary element. The sequence is that of ATP synthase subunit 9, mitochondrial (ATP9) from Paramecium tetraurelia.